A 150-amino-acid polypeptide reads, in one-letter code: Galactose-binding lectin (150 aa).

Histidine 16 and glycine 19 together coordinate D-galactose. Asparagine 26 is a glycosylation site (N-linked (GlcNAc...) asparagine). Residues aspartate 27, 35–37 (DIH), histidine 64, and glycine 67 each bind D-galactose. Asparagine 74 carries an N-linked (GlcNAc...) asparagine glycan. Residues glutamate 75, 83-85 (DRH), histidine 108, and glycine 111 each bind D-galactose. Asparagine 118 carries an N-linked (GlcNAc...) asparagine glycan. Residues glutamate 119 and 127 to 129 (DKH) contribute to the D-galactose site.

In terms of assembly, homodimer. Likely to form large oligomers; oligomerization enhances hemagglutination activity. Post-translationally, glycosylated.

With respect to regulation, hemagglutination activity is not dependent on divalent cations. Hemagglutination activity is highly inhibited by D-galactose and N-acetyl-D-galactosamine, and to a lesser extent by raffinose. Also inhibited by melibiose and alpha-lactose, but not by beta-lactose or D-glucose. In terms of biological role, D-galactose-binding lectin. Also binds N-acetyl-D-galactosamine. Has hemagglutination activity towards all types of human erythrocytes (O, A and B) and rabbit erythrocytes. Agglutinates Gram-negative and Gram-positive bacteria including E.coli DH5-alpha and L.plantarum ATCC8014, respectively, and has bacteriostatic activity against them. Also agglutinates M.lysodeikticus. May be involved in innate immunity by recognizing and eliminating pathogens. The polypeptide is Galactose-binding lectin (Mytilus californianus (California mussel)).